We begin with the raw amino-acid sequence, 330 residues long: Cyclin N-terminal domain-containing protein 1 (330 aa).

Residues Asp-27–Asn-178 enclose the Cyclin N-terminal domain.

Interacts with PRR19; this interaction promotes crossover formation. Interacts with RFC3 and RFC4; these interactions facilitate crossover formation. Interacts with CDC34; this interaction regulates the cell-cycle progression.

The protein localises to the nucleus. The protein resides in the cytoplasm. It localises to the chromosome. Its function is as follows. Plays a role in the different steps of crossover formation during meiotic recombination. Participates in the crossover differentiation step of crossover-specific recombination intermediates through its interaction with PRR19. In addition, stimulates crossover formation through the interactions with RFC3 and RFC4 and simultaneously regulates cell-cycle progression through interactions with CDC34 and subsequent ubiquitination of WEE1. May also participates in an active deselection process that destabilizes or removes excess pre-CO intermediates. This chain is Cyclin N-terminal domain-containing protein 1, found in Homo sapiens (Human).